The sequence spans 2286 residues: Non-reducing polyketide synthase fsr1 (2286 aa).

The tract at residues 7–342 (LYLFGDQTFD…IYTALKKTSL (336 aa)) is N-terminal acylcarrier protein transacylase domain (SAT). The Ketosynthase family 3 (KS3) domain occupies 368–805 (KPKLAIVAMS…GGNSALLIQD (438 aa)). Catalysis depends on for beta-ketoacyl synthase activity residues C540, H675, and H722. The acyl/malonyl transferases stretch occupies residues 905–1195 (VFTFTGQGAQ…GMVKPTLGQQ (291 aa)). Catalysis depends on S996, which acts as the For acyl/malonyl transferase activity. The interval 1285–1417 (HSVVEESGDS…CVVLFKDRSH (133 aa)) is N-terminal hotdog fold. Positions 1285 to 1591 (HSVVEESGDS…IQGVPRRVLK (307 aa)) constitute a PKS/mFAS DH domain. Residues 1296 to 1588 (KTGIVVEADI…QIAIQGVPRR (293 aa)) form a product template (PT) domainn region. H1317 serves as the catalytic Proton acceptor; for dehydratase activity. The segment at 1444–1591 (SARFNRPMAY…IQGVPRRVLK (148 aa)) is C-terminal hotdog fold. The active-site Proton donor; for dehydratase activity is the D1504. The interval 1600–1639 (KKGQPQRQTQDKPRNTPSQTKDSTPKPAQNKPAAKVEPPK) is disordered. Residues 1637-1712 (PPKFSTAIRI…DLRAFLGADE (76 aa)) form the Carrier 1 domain. At S1671 the chain carries O-(pantetheine 4'-phosphoryl)serine. Residues 1716 to 1735 (ESSSSAASDSGRDTTTTGSA) are disordered. The Carrier 2 domain occupies 1748–1823 (EVEFERALEI…DLKTMLAREM (76 aa)). S1782 is subject to O-(pantetheine 4'-phosphoryl)serine. The segment at 1897–2145 (VTGASGGLGS…NWTPVNDIAD (249 aa)) is reductase (R) domain.

It participates in polyketide biosynthesis. Non-reducing polyketide synthase; part of the gene cluster that mediates the biosynthesis of fusarubins, highly pigmented naphthoquinones responsible for the coloration of the fruiting bodies. The non-reducing polyketide synthase FSR1 is responsible for the condensation of seven acetyl-CoA units to yield a haptaketide. After rings A and B are formed by aldol-type cyclization, the PKS-derived product is released as 6-O-demethylfusarubinaldehyde. Then, two hydroxyl groups at C-5 and C-10 are incorporated by FSR3, and simultaneously hydroxyl groups at C-6 and C-8 are methylated by FSR2. The aldehyde is, on the one hand, reduced by FSR3 to 8-O-methylfusarubin alcohol, which equilibrates mainly with 8-O-methylfusarubin and only small amounts of 8-O-methylnectriafurone. On the other hand, the aldehyde can be oxidized to form 8-O-methylfusarubinic acid, a reaction driven by FSR3 equilibrating with 8-O-methylfusarubinlactone, finally resulting in 8-O-methylanhydrofusarubinlactol after a further reduction step and loss of water. 8-O-Methylfusarubinic acid can also undergo decarboxylation, resulting in 8-O-methyl-13-hydroxynorjavanicin after another hydroxylation step at C-13. Both steps are most likely also accomplished by FSR3. No enzymatic function has been determined so far for either FSR4 and FSR5. Their deletion does not alter the product spectrum, but the possibility that they catalyze specific enzymatic steps during perithecium development cannot be ruled out. FSR4 might possess a regulatory function in the biosynthesis of fusarubins. This Gibberella fujikuroi (strain CBS 195.34 / IMI 58289 / NRRL A-6831) (Bakanae and foot rot disease fungus) protein is Non-reducing polyketide synthase fsr1.